Here is a 424-residue protein sequence, read N- to C-terminus: Keratin, type I cytoskeletal 20 (424 aa).

The head stretch occupies residues 1-69 (MDFSRRSFHR…TGGGDLFVGN (69 aa)). Ser-13 is subject to Phosphoserine; by MAPKAPK2, MAPKAPK3 and PKC. A coil 1A region spans residues 70–105 (EKMAMQNLNDRLASYLEKVRTLEQSNSKLEVQIKQW). One can recognise an IF rod domain in the interval 70-381 (EKMAMQNLND…RLLEGEDVKT (312 aa)). Residues 106–123 (YETNAPRAGRDYSAYYRQ) are linker 1. The interval 124-215 (IEELRSQIKD…KEHQEEVDGL (92 aa)) is coil 1B. Residues 216–238 (HKHLGNTVNVEVDAAPGLNLGVI) are linker 12. Residues 239–377 (MNEMRQKYEV…ATYRRLLEGE (139 aa)) are coil 2. The segment at 378-424 (DVKTTEYQLSTLEERDIKKTRKIKTVVQEVVDGKVVSSEVKEVEENI) is tail.

It belongs to the intermediate filament family. Heterotetramer of two type I and two type II keratins. Associates with KRT8. Hyperphosphorylation at Ser-13 occurs during the early stages of apoptosis but becomes less prominent during the later stages. Phosphorylation at Ser-13 also increases in response to stress brought on by cell injury. In terms of processing, proteolytically cleaved by caspases during apoptosis. Cleavage occurs at Asp-228. As to expression, expressed predominantly in the intestinal epithelium. Expressed in luminal cells of colonic mucosa. Also expressed in the Merkel cells of keratinized oral mucosa; specifically at the tips of some rete ridges of the gingival mucosa, in the basal layer of the palatal mucosa and in the taste buds of lingual mucosa.

It is found in the cytoplasm. Plays a significant role in maintaining keratin filament organization in intestinal epithelia. When phosphorylated, plays a role in the secretion of mucin in the small intestine. The protein is Keratin, type I cytoskeletal 20 (KRT20) of Homo sapiens (Human).